We begin with the raw amino-acid sequence, 350 residues long: Eukaryotic translation initiation factor 3 subunit I (350 aa).

WD repeat units lie at residues 8 to 49 (GHER…GTLE), 51 to 89 (HQGV…CVYT), 91 to 135 (DSPS…ATLS), 149 to 188 (SEGS…LVTS), 198 to 240 (EKNV…KVYK), and 296 to 335 (GHFG…QDFL).

It belongs to the eIF-3 subunit I family. Component of the eukaryotic translation initiation factor 3 (eIF-3) complex.

The protein resides in the cytoplasm. Component of the eukaryotic translation initiation factor 3 (eIF-3) complex, which is involved in protein synthesis of a specialized repertoire of mRNAs and, together with other initiation factors, stimulates binding of mRNA and methionyl-tRNAi to the 40S ribosome. The eIF-3 complex specifically targets and initiates translation of a subset of mRNAs involved in cell proliferation. The sequence is that of Eukaryotic translation initiation factor 3 subunit I from Candida albicans (strain SC5314 / ATCC MYA-2876) (Yeast).